We begin with the raw amino-acid sequence, 1038 residues long: Translation initiation factor IF-2 (1038 aa).

Positions 32–442 (GSALASLSDE…RKGVNTAAPR (411 aa)) are disordered. Low complexity-rich tracts occupy residues 65–77 (PPTK…PVAP), 100–113 (PAEA…PAQP), and 131–147 (PKLA…APAA). Composition is skewed to basic and acidic residues over residues 204–217 (SGGR…KRES) and 275–295 (RSLD…DAGK). Positions 311 to 328 (PSAPAKPAAPTGSSGPAA) are enriched in low complexity. Over residues 331–344 (PDIKLTRDVIEGHK) the composition is skewed to basic and acidic residues. Residues 422-435 (HHYRRSRPRIRRKG) are compositionally biased toward basic residues. Positions 529 to 696 (ARPPVVTFLG…TLLTIAELNE (168 aa)) constitute a tr-type G domain. Residues 538-545 (GHVDHGKT) are G1. Position 538–545 (538–545 (GHVDHGKT)) interacts with GTP. Residues 563-567 (GITQH) form a G2 region. Residues 584–587 (DTPG) form a G3 region. GTP is bound by residues 584 to 588 (DTPGH) and 638 to 641 (NKID). The interval 638–641 (NKID) is G4. Positions 674–676 (SAT) are G5.

The protein belongs to the TRAFAC class translation factor GTPase superfamily. Classic translation factor GTPase family. IF-2 subfamily.

Its subcellular location is the cytoplasm. Its function is as follows. One of the essential components for the initiation of protein synthesis. Protects formylmethionyl-tRNA from spontaneous hydrolysis and promotes its binding to the 30S ribosomal subunits. Also involved in the hydrolysis of GTP during the formation of the 70S ribosomal complex. This Rhodopirellula baltica (strain DSM 10527 / NCIMB 13988 / SH1) protein is Translation initiation factor IF-2.